Here is a 357-residue protein sequence, read N- to C-terminus: uncharacterized protein (357 aa).

The stretch at 173-211 (VLPILEKLMQDESLYVRKSVANNLNDISKTHPHLLRKVA) is one HEAT repeat.

This is an uncharacterized protein from Bacillus subtilis (strain 168).